Here is a 219-residue protein sequence, read N- to C-terminus: C-8 sterol isomerase erg2 (219 aa).

Residues methionine 1 to isoleucine 21 traverse the membrane as a helical segment.

This sequence belongs to the ERG2 family.

It localises to the endoplasmic reticulum membrane. It catalyses the reaction fecosterol = episterol. Its pathway is steroid metabolism; ergosterol biosynthesis. Functionally, C-8 sterol isomerase; part of the third module of ergosterol biosynthesis pathway that includes by the late steps of the pathway. Erg2 catalyzes the reaction which results in unsaturation at C-7 in the B ring of sterols and thus converts fecosterol to episterol. The third module or late pathway involves the ergosterol synthesis itself through consecutive reactions that mainly occur in the endoplasmic reticulum (ER) membrane. Firstly, the squalene synthase erg9 catalyzes the condensation of 2 farnesyl pyrophosphate moieties to form squalene, which is the precursor of all steroids. Secondly, squalene is converted into lanosterol by the consecutive action of the squalene epoxidase erg1 and the lanosterol synthase erg7. The lanosterol 14-alpha-demethylase erg11/cyp1 catalyzes C14-demethylation of lanosterol to produce 4,4'-dimethyl cholesta-8,14,24-triene-3-beta-ol. In the next steps, a complex process involving various demethylation, reduction and desaturation reactions catalyzed by the C-14 reductase erg24 and the C-4 demethylation complex erg25-erg26-erg27 leads to the production of zymosterol. Erg28 likely functions in the C-4 demethylation complex reaction by tethering erg26 and Erg27 to the endoplasmic reticulum or to facilitate interaction between these proteins. Then, the sterol 24-C-methyltransferase erg6 catalyzes the methyl transfer from S-adenosyl-methionine to the C-24 of zymosterol to form fecosterol. The C-8 sterol isomerase erg2 catalyzes the reaction which results in unsaturation at C-7 in the B ring of sterols and thus converts fecosterol to episterol. The sterol-C5-desaturases erg31 and erg32 then catalyze the introduction of a C-5 double bond in the B ring to produce 5-dehydroepisterol. The C-22 sterol desaturase erg5 further converts 5-dehydroepisterol into ergosta-5,7,22,24(28)-tetraen-3beta-ol by forming the C-22(23) double bond in the sterol side chain. Finally, ergosta-5,7,22,24(28)-tetraen-3beta-ol is substrate of the C-24(28) sterol reductase erg4 to produce ergosterol. In the genus Schizosaccharomyces, a second route exists between lanosterol and fecosterol, via the methylation of lanosterol to eburicol by erg6, followed by C14-demethylation by erg11/cyp1 and C4-demethylation by the demethylation complex erg25-erg26-erg27. The polypeptide is C-8 sterol isomerase erg2 (Schizosaccharomyces pombe (strain 972 / ATCC 24843) (Fission yeast)).